The primary structure comprises 58 residues: Protein translocase subunit SecE (58 aa).

Residues 36-56 traverse the membrane as a helical segment; that stretch reads ILLIGFIGFLMFAIMSLLPGV.

This sequence belongs to the SecE/SEC61-gamma family. As to quaternary structure, component of the Sec protein translocase complex. Heterotrimer consisting of SecY (alpha), SecG (beta) and SecE (gamma) subunits. The heterotrimers can form oligomers, although 1 heterotrimer is thought to be able to translocate proteins. Interacts with the ribosome. May interact with SecDF, and other proteins may be involved.

The protein localises to the cell membrane. Essential subunit of the Sec protein translocation channel SecYEG. Clamps together the 2 halves of SecY. May contact the channel plug during translocation. The protein is Protein translocase subunit SecE of Halorubrum lacusprofundi (strain ATCC 49239 / DSM 5036 / JCM 8891 / ACAM 34).